The following is a 333-amino-acid chain: Secreted mono- and diacylglycerol lipase 1 (333 aa).

An N-terminal signal peptide occupies residues 1-16 (MMLILSILSIIAFAAA). 2 disulfides stabilise this stretch: Cys56-Cys268 and Cys276-Cys298. Ser176 serves as the catalytic Nucleophile. Residues Asp230 and His288 contribute to the active site.

The protein belongs to the AB hydrolase superfamily. Lipase family. Class 3 subfamily.

The protein resides in the secreted. It catalyses the reaction a monoacylglycerol + H2O = glycerol + a fatty acid + H(+). It carries out the reaction a diacylglycerol + H2O = a monoacylglycerol + a fatty acid + H(+). Functionally, secreted mono- and diacylglycerol lipase that allows the use of hydrolyzed lipids as carbon source and might play a role in pathogenicity. Shows lipolytic activity towards olive oil and p-nitrophenylpalmitate. This chain is Secreted mono- and diacylglycerol lipase 1, found in Fusarium solani (Filamentous fungus).